We begin with the raw amino-acid sequence, 395 residues long: Protein PIN-LIKES 7 (395 aa).

Residues 1-8 lie on the Lumenal side of the membrane; that stretch reads MGFLELLE. The helical transmembrane segment at 9-29 threads the bilayer; that stretch reads VASMPIVQVLLISVLGAFLAT. The Cytoplasmic portion of the chain corresponds to 30 to 45; the sequence is DYCSLLSADTRRSVNK. Residues 46 to 66 form a helical membrane-spanning segment; sequence LVFVVFTPCIMFANLAETVTL. At 67–73 the chain is on the lumenal side; that stretch reads QDIISWW. Residues 74 to 94 form a helical membrane-spanning segment; sequence FMPINVGITFLVGGILGWLVV. At 95–106 the chain is on the cytoplasmic side; it reads KLLNPKPQLHGL. A helical membrane pass occupies residues 107 to 127; sequence IIATCASGNMGNLMLILVPAI. Topologically, residues 128 to 142 are lumenal; sequence CDEEGSPFGNRSVCR. The helical transmembrane segment at 143 to 163 threads the bilayer; the sequence is SIGLSYASFSMALGGFYIWTY. Over 164 to 232 the chain is Cytoplasmic; sequence SYQLVRSSAT…KDLLHQILEE (69 aa). A helical membrane pass occupies residues 233–253; sequence LFAPPTIGAILGFVFGATNWL. At 254-272 the chain is on the lumenal side; it reads RNLIIGENAPLRVIQDSVK. A helical membrane pass occupies residues 273–293; the sequence is LLGEGTIPCITLILGGNLIQG. Over 294–302 the chain is Cytoplasmic; it reads LRSSAVKKS. Residues 303–323 form a helical membrane-spanning segment; the sequence is VIVGVIIVRYILLPVVGVGVV. Residues 324–340 are Lumenal-facing; it reads QLAGNLGYLPPDPLFRY. The chain crosses the membrane as a helical span at residues 341–361; it reads VLMLQFALPPAMNISTMAQLF. At 362 to 369 the chain is on the cytoplasmic side; it reads DVAQDECS. The helical transmembrane segment at 370–390 threads the bilayer; the sequence is VIFLWTYLVASLALTVWSTIF. The Lumenal portion of the chain corresponds to 391 to 395; sequence LSILS.

It belongs to the auxin efflux carrier (TC 2.A.69.2) family. As to expression, expressed in seedlings, rosette and cauline leaves, stems and flowers.

It localises to the endoplasmic reticulum membrane. Functionally, involved in cellular auxin homeostasis by regulating auxin metabolism. Regulates intracellular auxin accumulation at the endoplasmic reticulum and thus auxin availability for nuclear auxin signaling. The polypeptide is Protein PIN-LIKES 7 (Arabidopsis thaliana (Mouse-ear cress)).